A 141-amino-acid polypeptide reads, in one-letter code: Cytochrome c-type biogenesis protein CcmE (141 aa).

The Cytoplasmic portion of the chain corresponds to 1-7 (MRARTRR). A helical; Signal-anchor for type II membrane protein transmembrane segment spans residues 8–28 (LYTFGIAAALIVAAAALAFFA). Topologically, residues 29-141 (LRENANLFYT…RELKPLEAGG (113 aa)) are periplasmic. Positions 125 and 129 each coordinate heme.

This sequence belongs to the CcmE/CycJ family.

It localises to the cell inner membrane. Heme chaperone required for the biogenesis of c-type cytochromes. Transiently binds heme delivered by CcmC and transfers the heme to apo-cytochromes in a process facilitated by CcmF and CcmH. In Hyphomonas neptunium (strain ATCC 15444), this protein is Cytochrome c-type biogenesis protein CcmE.